The sequence spans 2670 residues: Inositol 1,4,5-trisphosphate-gated calcium channel ITPR3 (2670 aa).

The Cytoplasmic segment spans residues 1 to 2233 (MNEMSSFLHI…YVEGASTGVL (2233 aa)). MIR domains lie at 113–173 (GDVV…LRSN), 174–224 (GDNV…INLF), 232–288 (EEVL…VEVV), 295–372 (GGAG…LDPT), and 378–434 (DSFV…IVSV). 3 residues coordinate 1D-myo-inositol 1,4,5-trisphosphate: Arg-266, Leu-269, and Arg-270. The 1D-myo-inositol 1,4,5-trisphosphate site is built by Arg-503, Lys-507, Arg-510, Tyr-567, Arg-568, and Lys-569. Arg-743 contacts Ca(2+). 2 positions are modified to phosphoserine: Ser-916 and Ser-934. 2 residues coordinate Ca(2+): Glu-1122 and Glu-1125. Basic and acidic residues predominate over residues 1138–1153 (EVEAGATKDKKERPSD). Disordered regions lie at residues 1138-1164 (EVEA…HGEK) and 1807-1835 (NMSD…SFSM). Phosphoserine occurs at positions 1813, 1832, and 1834. Ca(2+)-binding residues include Glu-1881 and Glu-1945. Positions 1995, 2148, and 2151 each coordinate ATP. The chain crosses the membrane as a helical span at residues 2234–2254 (GSPLISLLFWILICFSIAALF). Residues 2255–2262 (TKRYSVRP) are Extracellular-facing. The chain crosses the membrane as a helical span at residues 2263-2283 (LIVALILRSIYYLGIGPTLNI). At 2284-2292 (LGALNLTNK) the chain is on the cytoplasmic side. A helical transmembrane segment spans residues 2293-2310 (IVFVVSFVGNRGTFIRGY). Residues 2311-2324 (KAMVMDMEFLYHVG) are Extracellular-facing. Residues 2325-2345 (YILTSVLGLFAHELFYSILLF) form a helical membrane-spanning segment. The Cytoplasmic segment spans residues 2346-2367 (DLIYREETLFNVIKSVTRNGRS). A helical membrane pass occupies residues 2368–2388 (ILLTALLALILVYLFSIVGFL). The Extracellular portion of the chain corresponds to 2389–2495 (FLKDDFILEV…ESLFPARVVY (107 aa)). Cys-2454 and Cys-2460 are disulfide-bonded. The chain crosses the membrane as a helical span at residues 2496-2516 (DLLFFFIVIIIVLNLIFGVII). Residues 2517–2670 (DTFADLRSEK…FVDVQNCMSR (154 aa)) are Cytoplasmic-facing. ATP contacts are provided by Cys-2537 and Phe-2538. Cys-2537 serves as a coordination point for Zn(2+). The Zn(2+) site is built by Cys-2540 and His-2557. ATP is bound by residues Lys-2559, His-2562, Asn-2563, and Met-2564. His-2562 serves as a coordination point for Zn(2+). Ca(2+) is bound at residue Thr-2580. Residues Ser-2608 and Ser-2669 each carry the phosphoserine modification.

This sequence belongs to the InsP3 receptor family. In terms of assembly, homodimer. Homotetramer. Interacts with TRPC1, TRPC3, TRPC4. Interacts with TRPV4. Interacts with SIGMAR1. Found in a complex with AKT1 and PML; this interaction modulates IP3R3-phosphorylation and in turn ITPR3-dependent calcium release. Interacts with IRAG2 (via coiled-coil domain). Interacts with CABP1. Interacts with TMBIM4/LFG4. Interacts with CEMIP. Interacts with TESPA1. Interacts with TMEM203. Interacts with BOK; regulates ITPR3 expression. Interacts with BCL2L10. Interacts with CHGA and CHGB. In terms of processing, phosphorylated by AKT1 on serine and/or threonine residues.

Its subcellular location is the endoplasmic reticulum membrane. The protein localises to the cytoplasmic vesicle. It is found in the secretory vesicle membrane. The enzyme catalyses Ca(2+)(in) = Ca(2+)(out). Its activity is regulated as follows. Inositol 1,4,5-trisphosphate-gated calcium channel is regulated by cytosolic calcium in a biphasic manner. At low concentrations, cytosolic calcium binds at a high-affinity juxtamembrane domain (JD) calcium binding site, allowing ITPR3 to activate by escaping a low-energy resting state through an ensemble of preactivated states. At high cytosolic calcium concentrations, ITPR3 preferentially enters an inhibited state stabilized by calcium binding at a second, low-affinity cytoplasmic domain (CD) calcium binding site. Functionally, inositol 1,4,5-trisphosphate-gated calcium channel that, upon 1D-myo-inositol 1,4,5-trisphosphate binding, transports calcium from the endoplasmic reticulum lumen to cytoplasm, thus releasing the intracellular calcium and therefore participates in cellular calcium ion homeostasis. 1D-myo-inositol 1,4,5-trisphosphate binds to the ligand-free channel without altering its global conformation, yielding the low-energy resting state, then progresses through resting-to preactivated transitions to the higher energy preactivated state, which increases affinity for calcium, promoting binding of the low basal cytosolic calcium at the juxtamembrane domain (JD) site, favoring the transition through the ensemble of high-energy intermediate states along the trajectory to the fully-open activated state. Upon opening, releases calcium in the cytosol where it can bind to the low-affinity cytoplasmic domain (CD) site and stabilizes the inhibited state to terminate calcium release. This chain is Inositol 1,4,5-trisphosphate-gated calcium channel ITPR3, found in Mus musculus (Mouse).